The chain runs to 173 residues: Shikimate kinase 1 (173 aa).

Residue 14 to 19 (GAGKST) coordinates ATP. Position 18 (Ser-18) interacts with Mg(2+). Asp-36, Arg-60, and Gly-82 together coordinate substrate. Position 120 (Arg-120) interacts with ATP. A substrate-binding site is contributed by Arg-140. Gln-157 serves as a coordination point for ATP.

The protein belongs to the shikimate kinase family. In terms of assembly, monomer. Mg(2+) serves as cofactor.

Its subcellular location is the cytoplasm. It catalyses the reaction shikimate + ATP = 3-phosphoshikimate + ADP + H(+). Its pathway is metabolic intermediate biosynthesis; chorismate biosynthesis; chorismate from D-erythrose 4-phosphate and phosphoenolpyruvate: step 5/7. Catalyzes the specific phosphorylation of the 3-hydroxyl group of shikimic acid using ATP as a cosubstrate. The protein is Shikimate kinase 1 of Salmonella typhimurium (strain LT2 / SGSC1412 / ATCC 700720).